Consider the following 163-residue polypeptide: Nucleotide-binding protein Dde_2479 (163 aa).

The protein belongs to the YajQ family.

Nucleotide-binding protein. In Oleidesulfovibrio alaskensis (strain ATCC BAA-1058 / DSM 17464 / G20) (Desulfovibrio alaskensis), this protein is Nucleotide-binding protein Dde_2479.